The following is a 2511-amino-acid chain: Chromodomain-helicase-DNA-binding protein 8 (2511 aa).

The disordered stretch occupies residues 484-615; it reads PRVLNQDELP…RSNRQVKRKK (132 aa). Residues 515–524 are compositionally biased toward gly residues; sequence GGGVGGGGGG. A compositionally biased stretch (basic residues) spans 604-615; it reads KRRSNRQVKRKK. 2 Chromo domains span residues 680–745 and 760–826; these read AIVD…AQMR and VEVD…RTPR. In terms of domain architecture, Helicase ATP-binding spans 859 to 1033; the sequence is LFNWYNRQNC…FSLLHFLEPA (175 aa). 872-879 lines the ATP pocket; the sequence is DEMGLGKT. The DEAH box signature appears at 984 to 987; sequence DEAH. The 157-residue stretch at 1174–1330 folds into the Helicase C-terminal domain; sequence LLDKLLPRLK…SMSGNKESSI (157 aa). 4 disordered regions span residues 1440–1482, 1715–1736, 2086–2168, and 2468–2511; these read TRQF…HSGG, EQQA…SEDP, SKNN…LTDP, and PSAL…SSED. A compositionally biased stretch (acidic residues) spans 1452 to 1461; sequence DLSDLDSDDD. Residues 2111 to 2125 are compositionally biased toward low complexity; it reads DSGSSSSSRHSGSSD.

The protein belongs to the SNF2/RAD54 helicase family. CHD8 subfamily. In terms of assembly, component of some MLL1/MLL complex.

Its subcellular location is the nucleus. The enzyme catalyses ATP + H2O = ADP + phosphate + H(+). ATP-dependent chromatin-remodeling factor, it slides nucleosomes along DNA; nucleosome sliding requires ATP. Acts as a transcription repressor by remodeling chromatin structure and recruiting histone H1 to target genes. Suppresses p53/tp53-mediated apoptosis by recruiting histone H1 and preventing p53/tp53 transactivation activity. Acts as a negative regulator of Wnt signaling pathway by regulating beta-catenin (ctnnb1) activity. Negatively regulates ctnnb1-targeted gene expression by being recruited specifically to the promoter regions of several ctnnb1 responsive genes. May also act as a transcription activator by participating in efficient U6 RNA polymerase III transcription. The chain is Chromodomain-helicase-DNA-binding protein 8 from Danio rerio (Zebrafish).